The following is a 497-amino-acid chain: Serine hydroxymethyltransferase (497 aa).

(6S)-5,6,7,8-tetrahydrofolate contacts are provided by residues Leu-176 and 180–182 (GHL). Lys-289 carries the N6-(pyridoxal phosphate)lysine modification.

This sequence belongs to the SHMT family. In terms of assembly, homodimer. The cofactor is pyridoxal 5'-phosphate.

Its subcellular location is the cytoplasm. It carries out the reaction (6R)-5,10-methylene-5,6,7,8-tetrahydrofolate + glycine + H2O = (6S)-5,6,7,8-tetrahydrofolate + L-serine. It functions in the pathway one-carbon metabolism; tetrahydrofolate interconversion. The protein operates within amino-acid biosynthesis; glycine biosynthesis; glycine from L-serine: step 1/1. In terms of biological role, catalyzes the reversible interconversion of serine and glycine with tetrahydrofolate (THF) serving as the one-carbon carrier. This reaction serves as the major source of one-carbon groups required for the biosynthesis of purines, thymidylate, methionine, and other important biomolecules. Also exhibits THF-independent aldolase activity toward beta-hydroxyamino acids, producing glycine and aldehydes, via a retro-aldol mechanism. This Chlamydia abortus (strain DSM 27085 / S26/3) (Chlamydophila abortus) protein is Serine hydroxymethyltransferase.